A 1023-amino-acid chain; its full sequence is MGAGALAICQSKAAVRLKEDMKKIVAVPLNEQKDFTYQKLFGVSLQELERQGLTENGIPAVVWNIVEYLTQHGLTQEGLFRVNGNVKVVEQLRLKFESGVPVELGKDGDVCSAASLLKLFLRELPDSLITSALQPRFIQLFQDGRNDVQESSLRDLIKELPDTHYCLLKYLCQFLTKVAKHHVQNRMNVHNLATVFGPNCFHVPPGLEGMKEQDLCNKIMAKILENYNTLFEVEYTENDHLRCENLARLIIVKEVYYKNSLPILLTRGLERDMPKPPPKTKIPKSRSEGSIQAHRVLQPELSDGIPQLSLRLSYRKACLEDMNSAEGAISAKLVPSSQEDERPLSPFYLSAHVPQVSNVSATGELLERTIRSAVEQHLFDVNNSGGQSSEDSESGTLSASSATSARQRRRQSKEQDEVRHGRDKGLINKENTPSGFNHLDDCILNTQEVEKVHKNTFGCAGERSKPKRQKSSTKLSELHDNQDGLVNMESLNSTRSHERTGPDDFEWMSDERKGNEKDGGHTQHFESPTMKIQEHPSLSDTKQQRNQDAGDQEESFVSEVPQSDLTALCDEKNWEEPIPAFSSWQRENSDSDEAHLSPQAGRLIRQLLDEDSDPMLSPRFYAYGQSRQYLDDTEVPPSPPNSHSFMRRRSSSLGSYDDEQEDLTPAQLTRRIQSLKKKIRKFEDRFEEEKKYRPSHSDKAANPEVLKWTNDLAKFRRQLKESKLKISEEDLTPRMRQRSNTLPKSFGSQLEKEDEKKQELVDKAIKPSVEATLESIQRKLQEKRAESSRPEDIKDMTKDQIANEKVALQKALLYYESIHGRPVTKNERQVMKPLYDRYRLVKQILSRANTIPIIGSPSSKRRSPLLQPIIEGETASFFKEIKEEEEGSEDDSNVKPDFMVTLKTDFSARCFLDQFEDDADGFISPMDDKIPSKCSQDTGLSNLHAASIPELLEHLQEMREEKKRIRKKLRDFEDNFFRQNGRNVQKEDRTPMAEEYSEYKHIKAKLRLLEVLISKRDTDSKSM.

The Rho-GAP domain occupies 43-231 (VSLQELERQG…KILENYNTLF (189 aa)). Positions 269-290 (LERDMPKPPPKTKIPKSRSEGS) are disordered. At Ser-345 the chain carries Phosphoserine. Disordered regions lie at residues 381–437 (VNNS…SGFN) and 459–562 (CAGE…EVPQ). Over residues 384–405 (SGGQSSEDSESGTLSASSATSA) the composition is skewed to low complexity. 2 stretches are compositionally biased toward basic and acidic residues: residues 412 to 427 (SKEQ…KGLI) and 509 to 524 (SDER…HTQH). Polar residues predominate over residues 536–549 (PSLSDTKQQRNQDA). A phosphoserine mark is found at Ser-597 and Ser-617. Disordered regions lie at residues 628–663 (QYLD…QEDL) and 726–759 (ISEE…KKQE). Positions 666–730 (AQLTRRIQSL…ESKLKISEED (65 aa)) form a coiled coil. Phosphoserine is present on Ser-727. Residue Thr-732 is modified to Phosphothreonine. Residues 738–748 (RSNTLPKSFGS) show a composition bias toward polar residues. Residues 750–759 (LEKEDEKKQE) show a composition bias toward basic and acidic residues. Residues 946 to 978 (ASIPELLEHLQEMREEKKRIRKKLRDFEDNFFR) adopt a coiled-coil conformation.

Belongs to the FAM13 family. As to expression, isoform 1 is widely expressed, with highest expression in skeletal muscle, thymus, brain and lung. Isoform 3 is less abundant than isoform 1 and predominantly expressed in kidney, pancreas, liver, lung and thymus.

The polypeptide is Protein FAM13A (FAM13A) (Homo sapiens (Human)).